The chain runs to 582 residues: Glutamine--tRNA ligase (582 aa).

Positions 50-60 (PEPNGYLHIGH) match the 'HIGH' region motif. Residues 51–53 (EPN) and 57–63 (HIGHAKS) each bind ATP. Asp-83 and Tyr-235 together coordinate L-glutamine. Residues Thr-254 and 289–290 (RL) each bind ATP. The 'KMSKS' region motif lies at 296 to 300 (ITSKR).

The protein belongs to the class-I aminoacyl-tRNA synthetase family. In terms of assembly, monomer.

Its subcellular location is the cytoplasm. The catalysed reaction is tRNA(Gln) + L-glutamine + ATP = L-glutaminyl-tRNA(Gln) + AMP + diphosphate. This chain is Glutamine--tRNA ligase, found in Cupriavidus metallidurans (strain ATCC 43123 / DSM 2839 / NBRC 102507 / CH34) (Ralstonia metallidurans).